Reading from the N-terminus, the 707-residue chain is Caprin-1 (707 aa).

Low complexity-rich tracts occupy residues 1–15 (MPSATSHSGSGSKSS) and 22–43 (GSSGSEAAAGAAAPASQHPATG). The tract at residues 1–48 (MPSATSHSGSGSKSSGPPPPSGSSGSEAAAGAAAPASQHPATGTGAVQ) is disordered. At Pro-2 the chain carries N-acetylproline. The residue at position 10 (Ser-10) is a Phosphoserine. A coiled-coil region spans residues 58–92 (VIDKKLRNLEKKKGKLDDYQERMNKGERLNQDQLD). Ser-113 bears the Phosphoserine mark. A coiled-coil region spans residues 123-151 (KTIKKTARREQLMREEAEQKRLKTVLELQ). Arg-163 carries the post-translational modification Omega-N-methylarginine. Residues 325–335 (LQQQPQAASPS) show a composition bias toward low complexity. The disordered stretch occupies residues 325–347 (LQQQPQAASPSVPEPHSLTPVAQ). A phosphoserine mark is found at Ser-333 and Ser-341. Residues 358–379 (QDLMAQMQGPYNFIQDSMLDFE) form a G3BP1-binding region. Disordered stretches follow at residues 412 to 496 (ESRL…AGTS), 526 to 558 (PANEPETLKQQSQYQATYNQSFSSQPHQVEQTE), and 570 to 707 (TYHG…QQVN). A compositionally biased stretch (polar residues) spans 431 to 452 (PLVSSTSEGYTASQPLYQPSHA). The span at 453-462 (TEQRPQKEPM) shows a compositional bias: basic and acidic residues. Residues 465–474 (IQATISLNTD) are compositionally biased toward polar residues. Residues 475–489 (QTTASSSLPAASQPQ) show a composition bias toward low complexity. Composition is skewed to polar residues over residues 533–552 (LKQQSQYQATYNQSFSSQPH) and 572–603 (HGSQDQPHQVPGNHQQPPQQNTGFPRSSQPYY). Tyr-623 carries the post-translational modification Phosphotyrosine. Residues Arg-624 and Arg-631 each carry the omega-N-methylarginine modification. Phosphotyrosine occurs at positions 634 and 637. Arg-638 carries the omega-N-methylarginine modification. Polar residues predominate over residues 640–655 (SFSNTPNSGYSQSQFT). Ser-642 and Ser-647 each carry an O-linked (GlcNAc) serine glycan. Residues Tyr-649, Tyr-660, Tyr-663, and Tyr-668 each carry the phosphotyrosine modification. Composition is skewed to low complexity over residues 674–684 (RGSGQSGPRGA) and 695–707 (NRGMPQMNTQQVN). Arg-696 bears the Asymmetric dimethylarginine; alternate mark. Arg-696 is subject to Omega-N-methylarginine; alternate.

It belongs to the caprin family. May form homomultimers. Interacts with G3BP1; interaction is direct and promotes stress granule formation. Interacts with G3BP2; interaction is direct and promotes stress granule formation. Interacts with PQBP1. Interacts with DDX3X. Interacts (when phosphorylated by EPHA4) with FMR1; interaction with FMR1 promotes formation of a membraneless compartment. Post-translationally, tyrosine phosphorylation by EPHA4 promotes interaction with FMR1 and liquid-liquid phase separation (LLPS) for the formation of a membraneless compartment that concentrates mRNAs with associated regulatory factors. In terms of processing, O-glycosylated (O-GlcNAcylated), in a cell cycle-dependent manner. O-glycosylation by OGT inhibit ability to undergo liquid-liquid phase separation (LLPS). In terms of tissue distribution, highest expression in thymus, spleen and brain (at protein level). Lower levels in kidney, muscle and liver (at protein level).

It is found in the cytoplasm. Its subcellular location is the cytoplasmic ribonucleoprotein granule. It localises to the cytosol. The protein resides in the cell projection. The protein localises to the dendrite. It is found in the lamellipodium. Ability to mediate liquid-liquid phase separation is regulated by ATP: moderate concentrations of ATP enhance phase separation, whereas high concentrations of ATP lead to inhibition of phase separation. Its function is as follows. mRNA-binding protein that acts as a regulator of mRNAs transport, translation and/or stability, and which is involved in neurogenesis, synaptic plasticity in neurons and cell proliferation and migration in multiple cell types. Plays an essential role in cytoplasmic stress granule formation. Acts as an mRNA regulator by mediating formation of some phase-separated membraneless compartment: undergoes liquid-liquid phase separation upon binding to target mRNAs, leading to assemble mRNAs into cytoplasmic ribonucleoprotein granules that concentrate mRNAs with associated regulatory factors. Undergoes liquid-liquid phase separation following phosphorylation and interaction with FMR1, promoting formation of cytoplasmic ribonucleoprotein granules that concentrate mRNAs with factors that inhibit translation and mediate deadenylation of target mRNAs. In these cytoplasmic ribonucleoprotein granules, CAPRIN1 mediates recruitment of CNOT7 deadenylase, leading to mRNA deadenylation and degradation. Binds directly and selectively to MYC and CCND2 mRNAs. In neuronal cells, directly binds to several mRNAs associated with RNA granules, including BDNF, CAMK2A, CREB1, MAP2, NTRK2 mRNAs, as well as to GRIN1 and KPNB1 mRNAs, but not to rRNAs. This Mus musculus (Mouse) protein is Caprin-1 (Caprin1).